The chain runs to 452 residues: Gamma-aminobutyric acid receptor subunit delta (452 aa).

Residues 1-24 form the signal peptide; sequence MDAPARLLAPLLLLCAQQLRGTRA. The Extracellular segment spans residues 25–251; the sequence is MNDIGDYVGS…HLRRNRGVYI (227 aa). N-linked (GlcNAc...) asparagine glycans are attached at residues asparagine 103 and asparagine 106. Cysteine 164 and cysteine 178 are oxidised to a cystine. The helical transmembrane segment at 252-271 threads the bilayer; it reads IQSYMPSVLLVAMSWVSFWI. Residues 272 to 275 are Cytoplasmic-facing; sequence SQAA. Residues 276 to 298 traverse the membrane as a helical segment; it reads VPARVSLGITTVLTMTTLMVSAR. Residues 299–308 are Extracellular-facing; sequence SSLPRASAIK. A helical membrane pass occupies residues 309 to 331; it reads ALDVYFWICYVFVFAALVEYAFA. The Cytoplasmic portion of the chain corresponds to 332–426; that stretch reads HFNADYRKKQ…ARLRPIDADT (95 aa). Position 390 is a phosphoserine (serine 390). Residues 427–449 traverse the membrane as a helical segment; that stretch reads IDIYARAVFPAAFAAVNVIYWAA. Residues 450–452 are Extracellular-facing; the sequence is YAM.

Belongs to the ligand-gated ion channel (TC 1.A.9) family. Gamma-aminobutyric acid receptor (TC 1.A.9.5) subfamily. GABRD sub-subfamily. In terms of assembly, heteropentamer, formed by a combination of alpha (GABRA1-6), beta (GABRB1-3), gamma (GABRG1-3), delta (GABRD), epsilon (GABRE), rho (GABRR1-3), pi (GABRP) and theta (GABRQ) chains, each subunit exhibiting distinct physiological and pharmacological properties.

The protein localises to the cell membrane. The enzyme catalyses chloride(in) = chloride(out). Its function is as follows. Delta subunit of the heteropentameric ligand-gated chloride channel gated by gamma-aminobutyric acid (GABA), a major inhibitory neurotransmitter in the brain. GABA-gated chloride channels, also named GABA(A) receptors (GABAAR), consist of five subunits arranged around a central pore and contain GABA active binding site(s) located at the alpha and beta subunit interface(s). When activated by GABA, GABAARs selectively allow the flow of chloride anions across the cell membrane down their electrochemical gradient. GABAARs containing delta/GABRD subunits are predominantly located in extrasynaptic or perisynaptic positions on hippocampus and cerebellar granule cells, and contribute to the tonic GABAergic inhibition. GABAAR containing alpha-4-beta-3-delta subunits can simultaneously bind GABA and histamine where histamine binds at the interface of two neighboring beta subunits, which may be involved in the regulation of sleep and wakefulness. This chain is Gamma-aminobutyric acid receptor subunit delta, found in Homo sapiens (Human).